Consider the following 119-residue polypeptide: NLVQFSYVITCANHNRRSSLDYADYGCYCGAGGSGTPVDELDRCCKIHDDCYGEAEKQGCYPKMLMYDYYCGSNGPYCRNVKKKCNRKVCDCDVAAAECFARNAYNNANYNIDTKKRCK.

7 cysteine pairs are disulfide-bonded: Cys-11-Cys-71, Cys-27-Cys-118, Cys-29-Cys-45, Cys-44-Cys-99, Cys-51-Cys-92, Cys-60-Cys-85, and Cys-78-Cys-90. Residues Tyr-28, Gly-30, and Gly-32 each contribute to the Ca(2+) site. Residue His-48 is part of the active site. Asp-49 contacts Ca(2+). Asp-93 is a catalytic residue.

Belongs to the phospholipase A2 family. Group I subfamily. D49 sub-subfamily. The cofactor is Ca(2+). As to expression, expressed by the venom gland.

It localises to the secreted. It carries out the reaction a 1,2-diacyl-sn-glycero-3-phosphocholine + H2O = a 1-acyl-sn-glycero-3-phosphocholine + a fatty acid + H(+). Functionally, snake venom phospholipase A2 (PLA2) that has several activities. It is myotoxic, has weak anticoagulant activity and inhibits neuromuscular transmission by blocking acetylcholine release from the nerve termini. PLA2 catalyzes the calcium-dependent hydrolysis of the 2-acyl groups in 3-sn-phosphoglycerides. The protein is Basic phospholipase A2 of Hydrophis schistosus (Beaked sea snake).